A 401-amino-acid polypeptide reads, in one-letter code: Nuclear hormone receptor family member nhr-65 (401 aa).

Positions 10-79 (PERCKVCGDT…AGMSSENFQF (70 aa)) form a DNA-binding region, nuclear receptor. NR C4-type zinc fingers lie at residues 13 to 33 (CKVCGDTGNGMHFGAFTCRAC) and 49 to 67 (CENHLIFALKCKNCRLQRC). In terms of domain architecture, NR LBD spans 132–398 (KAEKLIEFGS…FSHPEFIQDA (267 aa)).

Belongs to the nuclear hormone receptor family.

The protein resides in the nucleus. Functionally, orphan nuclear receptor. The sequence is that of Nuclear hormone receptor family member nhr-65 (nhr-65) from Caenorhabditis elegans.